Reading from the N-terminus, the 291-residue chain is 4-hydroxy-tetrahydrodipicolinate synthase (291 aa).

Position 47 (T47) interacts with pyruvate. Residue Y134 is the Proton donor/acceptor of the active site. The Schiff-base intermediate with substrate role is filled by K162. Pyruvate is bound at residue I205.

This sequence belongs to the DapA family. As to quaternary structure, homotetramer; dimer of dimers.

It is found in the cytoplasm. It carries out the reaction L-aspartate 4-semialdehyde + pyruvate = (2S,4S)-4-hydroxy-2,3,4,5-tetrahydrodipicolinate + H2O + H(+). The protein operates within amino-acid biosynthesis; L-lysine biosynthesis via DAP pathway; (S)-tetrahydrodipicolinate from L-aspartate: step 3/4. Functionally, catalyzes the condensation of (S)-aspartate-beta-semialdehyde [(S)-ASA] and pyruvate to 4-hydroxy-tetrahydrodipicolinate (HTPA). The protein is 4-hydroxy-tetrahydrodipicolinate synthase of Methanosphaerula palustris (strain ATCC BAA-1556 / DSM 19958 / E1-9c).